Reading from the N-terminus, the 470-residue chain is ATP synthase subunit beta 2 (470 aa).

Position 155–162 (155–162) interacts with ATP; sequence GGAGVGKT.

The protein belongs to the ATPase alpha/beta chains family. F-type ATPases have 2 components, CF(1) - the catalytic core - and CF(0) - the membrane proton channel. CF(1) has five subunits: alpha(3), beta(3), gamma(1), delta(1), epsilon(1). CF(0) has three main subunits: a(1), b(2) and c(9-12). The alpha and beta chains form an alternating ring which encloses part of the gamma chain. CF(1) is attached to CF(0) by a central stalk formed by the gamma and epsilon chains, while a peripheral stalk is formed by the delta and b chains.

It localises to the cell inner membrane. It carries out the reaction ATP + H2O + 4 H(+)(in) = ADP + phosphate + 5 H(+)(out). Produces ATP from ADP in the presence of a proton gradient across the membrane. The catalytic sites are hosted primarily by the beta subunits. The polypeptide is ATP synthase subunit beta 2 (Nitrosospira multiformis (strain ATCC 25196 / NCIMB 11849 / C 71)).